We begin with the raw amino-acid sequence, 207 residues long: CASP-like protein 1D1 (207 aa).

At 1–40 (MATVDGTTAPSSGGKTATVALESGGGRYGGPAPAKCSGAN) the chain is on the cytoplasmic side. The chain crosses the membrane as a helical span at residues 41–61 (LALRALLFAVSLSALVVLVTA). The Extracellular portion of the chain corresponds to 62–89 (KQTVMVPFVIRPPQFILAPVPAKYTHSP). Residues 90 to 110 (ALIYLLAALCATCFYSLITAI) traverse the membrane as a helical segment. At 111-124 (SSVRLLSSSACSAK) the chain is on the cytoplasmic side. A helical transmembrane segment spans residues 125 to 145 (TLFYLILLDVFYAAVMASATG). At 146-176 (TAGAVAWVGLKGNSHTRWNKICNVYGKFCRH) the chain is on the extracellular side. The chain crosses the membrane as a helical span at residues 177–197 (IGSSTFLALIAAIVLVLLAFL). The Cytoplasmic portion of the chain corresponds to 198 to 207 (NAYSLYRRSR).

This sequence belongs to the Casparian strip membrane proteins (CASP) family. Homodimer and heterodimers.

It is found in the cell membrane. The chain is CASP-like protein 1D1 from Oryza sativa subsp. japonica (Rice).